Consider the following 880-residue polypeptide: Alanine--tRNA ligase (880 aa).

The interval 414–443 is disordered; sequence TVDESEFESEMEKQRNRARKARSGGDTEGW. Positions 566, 570, 668, and 672 each coordinate Zn(2+).

This sequence belongs to the class-II aminoacyl-tRNA synthetase family. It depends on Zn(2+) as a cofactor.

It is found in the cytoplasm. The catalysed reaction is tRNA(Ala) + L-alanine + ATP = L-alanyl-tRNA(Ala) + AMP + diphosphate. Functionally, catalyzes the attachment of alanine to tRNA(Ala) in a two-step reaction: alanine is first activated by ATP to form Ala-AMP and then transferred to the acceptor end of tRNA(Ala). Also edits incorrectly charged Ser-tRNA(Ala) and Gly-tRNA(Ala) via its editing domain. In Alkaliphilus metalliredigens (strain QYMF), this protein is Alanine--tRNA ligase.